The sequence spans 104 residues: MVFLHIMLATWGLHMSFYVKKLSSPQNYFEITEEDFREIPKLKEIFVDLQKLAPGEERSYELDFSTGNKISEYLTEKQAEVGECGYTYCFKYGDAYYGAHMGTP.

This is an uncharacterized protein from Archaeoglobus fulgidus (strain ATCC 49558 / DSM 4304 / JCM 9628 / NBRC 100126 / VC-16).